Consider the following 367-residue polypeptide: Apolipoprotein A-V (367 aa).

The signal sequence occupies residues 1–20 (MVAVLTWALALLSAFATVQT). The residue at position 56 (serine 56) is a Phosphoserine. The interval 71–90 (LGPLSGQGREPPGLPHDPEG) is disordered.

It belongs to the apolipoprotein A1/A4/E family. Interacts with GPIHBP1. Interacts with SORL1; this interaction leads to APOA5 internalization and sorting either to lysosomes and degradation, or to the trans-Golgi network. Phosphorylated by FAM20C in the extracellular medium.

The protein resides in the secreted. It localises to the early endosome. It is found in the late endosome. The protein localises to the golgi apparatus. Its subcellular location is the trans-Golgi network. Functionally, minor apolipoprotein mainly associated with HDL and to a lesser extent with VLDL. May also be associated with chylomicrons. Important determinant of plasma triglyceride (TG) levels by both being a potent stimulator of apo-CII lipoprotein lipase (LPL) TG hydrolysis and an inhibitor of the hepatic VLDL-TG production rate (without affecting the VLDL-apoB production rate). Activates poorly lecithin:cholesterol acyltransferase (LCAT) and does not enhance efflux of cholesterol from macrophages. Binds heparin. This Leptonychotes weddellii (Weddell seal) protein is Apolipoprotein A-V (APOA5).